A 225-amino-acid chain; its full sequence is UPF0173 metal-dependent hydrolase PH1671 (225 aa).

This sequence belongs to the UPF0173 family.

The protein is UPF0173 metal-dependent hydrolase PH1671 of Pyrococcus horikoshii (strain ATCC 700860 / DSM 12428 / JCM 9974 / NBRC 100139 / OT-3).